The sequence spans 276 residues: MLLRFTKMHGLGNDFMVLDLVSQHAHIQPKHAKMWGDRHTGIGFDQLLIVEAPSNPDVDFRYRIFNSDGSEVEQCGNGARCFARFVLDKRLTAKRQIRVETKGGIIELDVRNDGQIGVNMGAPRLVPADIPFQAPEQALSYQVDVDGTPVDLAAVSMGNPHAVLRVSDINTAPVHELGPKIEHHPRFPARVNVGFLQVIDRHRAQLRVWERGAGETQACGTGACAAAVAAISQGWMDSPLLIDLPGGRLSIEWAGPGQPVLMTGPAVRVYEGQVRL.

3 residues coordinate substrate: Asn-13, Gln-46, and Asn-66. Residue Cys-75 is the Proton donor of the active site. Substrate is bound by residues 76–77, Asn-159, Asn-192, and 210–211; these read GN and ER. Cys-219 serves as the catalytic Proton acceptor. Substrate is bound at residue 220–221; it reads GT.

The protein belongs to the diaminopimelate epimerase family. In terms of assembly, homodimer.

It is found in the cytoplasm. It carries out the reaction (2S,6S)-2,6-diaminopimelate = meso-2,6-diaminopimelate. It functions in the pathway amino-acid biosynthesis; L-lysine biosynthesis via DAP pathway; DL-2,6-diaminopimelate from LL-2,6-diaminopimelate: step 1/1. Catalyzes the stereoinversion of LL-2,6-diaminopimelate (L,L-DAP) to meso-diaminopimelate (meso-DAP), a precursor of L-lysine and an essential component of the bacterial peptidoglycan. This chain is Diaminopimelate epimerase, found in Pseudomonas fluorescens (strain Pf0-1).